The following is a 353-amino-acid chain: Methylthioribose-1-phosphate isomerase (353 aa).

Residues 51–53 (RGA), Arg94, and Gln199 each bind substrate. Catalysis depends on Asp240, which acts as the Proton donor. Substrate is bound at residue 250–251 (NK).

The protein belongs to the eIF-2B alpha/beta/delta subunits family. MtnA subfamily. Homodimer.

It carries out the reaction 5-(methylsulfanyl)-alpha-D-ribose 1-phosphate = 5-(methylsulfanyl)-D-ribulose 1-phosphate. The protein operates within amino-acid biosynthesis; L-methionine biosynthesis via salvage pathway; L-methionine from S-methyl-5-thio-alpha-D-ribose 1-phosphate: step 1/6. Catalyzes the interconversion of methylthioribose-1-phosphate (MTR-1-P) into methylthioribulose-1-phosphate (MTRu-1-P). The polypeptide is Methylthioribose-1-phosphate isomerase (Bacillus pumilus (strain SAFR-032)).